Consider the following 374-residue polypeptide: Putative glutamate--cysteine ligase 2 (374 aa).

This sequence belongs to the glutamate--cysteine ligase type 2 family. YbdK subfamily.

It carries out the reaction L-cysteine + L-glutamate + ATP = gamma-L-glutamyl-L-cysteine + ADP + phosphate + H(+). Functionally, ATP-dependent carboxylate-amine ligase which exhibits weak glutamate--cysteine ligase activity. This Leptothrix cholodnii (strain ATCC 51168 / LMG 8142 / SP-6) (Leptothrix discophora (strain SP-6)) protein is Putative glutamate--cysteine ligase 2.